The chain runs to 324 residues: MTAHLKKAELHCHIEGATPPELAVRQARKYGVDTGTIIRDGAYVWEDFTSFVKCYDAVASLFRTEGDYALLAEAYLTELAEAGTIYSEIIVSPDHGNTVGLGADAYLEGLAAGMEAAKARKGIESRMLITGIRHLGPEAVVRTAEYAASHRHPLVTGFNLAGEERMHSVAEFSRAFDIVRDAGLGLTIHAGELSGAFSVRDALDHVRPARISHGVRAIEDTDLVRRLADEGVVLEVCPGSNIALKVFPDFPSHPLRRLYDAGVRVTLNSDDPPFFHTSLAQEYEIAAHAMGFSDGEIDRMTRTALEAAFVDEPTRERLLAALHI.

The Zn(2+) site is built by His-11, His-13, and His-189. The active-site Proton donor is Glu-192. Position 270 (Asp-270) interacts with Zn(2+). Asp-271 contributes to the substrate binding site.

This sequence belongs to the metallo-dependent hydrolases superfamily. Adenosine and AMP deaminases family. Adenine deaminase type 2 subfamily. It depends on Zn(2+) as a cofactor.

It catalyses the reaction adenine + H2O + H(+) = hypoxanthine + NH4(+). Its function is as follows. Catalyzes the hydrolytic deamination of adenine to hypoxanthine. Plays an important role in the purine salvage pathway and in nitrogen catabolism. This Sinorhizobium medicae (strain WSM419) (Ensifer medicae) protein is Adenine deaminase.